A 195-amino-acid polypeptide reads, in one-letter code: Calcineurin B homologous protein 1 (195 aa).

Gly-2 carries the N-myristoyl glycine lipid modification. The Necessary for association with microtubule and interaction with GAPDH motif lies at 2-6 (GSRAS). EF-hand domains are found at residues 26 to 61 (SQIT…AINP), 71 to 106 (FSEG…NGPE), 110 to 145 (SRSN…MVGV), and 151 to 186 (QLGS…VDVE). 5 residues coordinate Ca(2+): Asp-123, Asp-125, Asp-127, Lys-129, and Glu-134. The Nuclear export signal 1 motif lies at 138-147 (VLRMMVGVNI). Ca(2+)-binding residues include Asp-164, Asp-166, Asp-168, and Glu-175. Positions 176–185 (FVKVLEKVDV) match the Nuclear export signal 2 motif.

The protein belongs to the calcineurin regulatory subunit family. CHP subfamily. In terms of assembly, monomer. Interacts with STK17B; the interaction occurs in a calcium-independent manner and induces the translocation of CHP1 from the Golgi to the nucleus. Interacts with GAPDH; the interaction is direct, occurs in a N-myristoylation-dependent manner and facilitates the ability of CHP1 to bind microtubules. Interacts with KIF1B (via the C-terminal end of the kinesin-motor domain); the interaction occurs in a calcium-dependent manner. Associates (via C-terminal domain) with microtubules; the association occurs with polymerized microtubules during the cell cycle in a myristoylation- and calcium-independent manner and is enhanced by GAPDH. Interacts with PPP3CA. Interacts with SLC9A1/NHE1 (via the cytoplasmic C-terminal domain); the interaction occurs at the plasma membrane in a calcium-dependent manner and at a domain that is critical for growth factor stimulation of the exchanger. Interacts with SLC9A3; increases SLC9A3 trafficking and activity at the plasma membrane. Post-translationally, phosphorylated; decreased phosphorylation is associated with an increase in SLC9A1/NHE1 Na(+)/H(+) exchange activity. Phosphorylation occurs in serum-dependent manner. The phosphorylation state may regulate the binding to SLC9A1/NHE1. In terms of processing, both N-myristoylation and calcium-mediated conformational changes are essential for its function in exocytic traffic. N-myristoylation is required for its association with microtubules and interaction with GAPDH, but not for the constitutive association to membranes.

The protein resides in the nucleus. It is found in the cytoplasm. Its subcellular location is the cytoskeleton. The protein localises to the endomembrane system. It localises to the endoplasmic reticulum-Golgi intermediate compartment. The protein resides in the endoplasmic reticulum. It is found in the cell membrane. Its subcellular location is the membrane. Functionally, calcium-binding protein involved in different processes such as regulation of vesicular trafficking, plasma membrane Na(+)/H(+) exchanger and gene transcription. Involved in the constitutive exocytic membrane traffic. Mediates the association between microtubules and membrane-bound organelles of the endoplasmic reticulum and Golgi apparatus and is also required for the targeting and fusion of transcytotic vesicles (TCV) with the plasma membrane. Functions as an integral cofactor in cell pH regulation by controlling plasma membrane-type Na(+)/H(+) exchange activity. Affects the pH sensitivity of SLC9A1/NHE1 by increasing its sensitivity at acidic pH. Required for the stabilization and localization of SLC9A1/NHE1 at the plasma membranes. Inhibits serum- and GTPase-stimulated Na(+)/H(+) exchange. Plays a role as an inhibitor of ribosomal RNA transcription by repressing the nucleolar UBF1 transcriptional activity. May sequester UBF1 in the nucleoplasm and limit its translocation to the nucleolus. Associates to the ribosomal gene promoter. Acts as a negative regulator of the calcineurin/NFAT signaling pathway. Inhibits NFAT nuclear translocation and transcriptional activity by suppressing the calcium-dependent calcineurin phosphatase activity. Also negatively regulates the kinase activity of the apoptosis-induced kinase STK17B. Inhibits both STK17B auto- and substrate-phosphorylations in a calcium-dependent manner. In Mus musculus (Mouse), this protein is Calcineurin B homologous protein 1 (Chp1).